The primary structure comprises 276 residues: Formamidopyrimidine-DNA glycosylase (276 aa).

Pro2 serves as the catalytic Schiff-base intermediate with DNA. The active-site Proton donor is the Glu3. Residue Lys59 is the Proton donor; for beta-elimination activity of the active site. DNA is bound by residues His92, Arg111, and Lys155. The segment at 239–273 adopts an FPG-type zinc-finger fold; the sequence is AVYGQTGAPCPRCGTAIEKIKVGGRGTHFCPTCQQ. Arg263 functions as the Proton donor; for delta-elimination activity in the catalytic mechanism.

The protein belongs to the FPG family. Monomer. Zn(2+) serves as cofactor.

The catalysed reaction is Hydrolysis of DNA containing ring-opened 7-methylguanine residues, releasing 2,6-diamino-4-hydroxy-5-(N-methyl)formamidopyrimidine.. It catalyses the reaction 2'-deoxyribonucleotide-(2'-deoxyribose 5'-phosphate)-2'-deoxyribonucleotide-DNA = a 3'-end 2'-deoxyribonucleotide-(2,3-dehydro-2,3-deoxyribose 5'-phosphate)-DNA + a 5'-end 5'-phospho-2'-deoxyribonucleoside-DNA + H(+). Its function is as follows. Involved in base excision repair of DNA damaged by oxidation or by mutagenic agents. Acts as a DNA glycosylase that recognizes and removes damaged bases. Has a preference for oxidized purines, such as 7,8-dihydro-8-oxoguanine (8-oxoG). Has AP (apurinic/apyrimidinic) lyase activity and introduces nicks in the DNA strand. Cleaves the DNA backbone by beta-delta elimination to generate a single-strand break at the site of the removed base with both 3'- and 5'-phosphates. The polypeptide is Formamidopyrimidine-DNA glycosylase (Exiguobacterium sibiricum (strain DSM 17290 / CCUG 55495 / CIP 109462 / JCM 13490 / 255-15)).